A 364-amino-acid polypeptide reads, in one-letter code: Aminomethyltransferase (364 aa).

This sequence belongs to the GcvT family. As to quaternary structure, the glycine cleavage system is composed of four proteins: P, T, L and H.

The catalysed reaction is N(6)-[(R)-S(8)-aminomethyldihydrolipoyl]-L-lysyl-[protein] + (6S)-5,6,7,8-tetrahydrofolate = N(6)-[(R)-dihydrolipoyl]-L-lysyl-[protein] + (6R)-5,10-methylene-5,6,7,8-tetrahydrofolate + NH4(+). In terms of biological role, the glycine cleavage system catalyzes the degradation of glycine. In Shigella dysenteriae serotype 1 (strain Sd197), this protein is Aminomethyltransferase.